The chain runs to 86 residues: Small ribosomal subunit protein uS17 (86 aa).

This sequence belongs to the universal ribosomal protein uS17 family. Part of the 30S ribosomal subunit.

One of the primary rRNA binding proteins, it binds specifically to the 5'-end of 16S ribosomal RNA. This is Small ribosomal subunit protein uS17 from Desulfitobacterium hafniense (strain DSM 10664 / DCB-2).